The primary structure comprises 442 residues: MRHRSCFSLFAGLALVFCLAVGTAAAGPVQVDIYGPGQGSLNLAMAAPLGPTPGTPVSGMGVKLNGFINENLSFLPFLRLVDQRAILGGTVMQGYKSPDIDLKRFQLAGADLVVTAGWPQGDASGSFVELRVYEALSGKLVFGKAYSHVEDGLLPNVADRFCSDLMKALTGRGEFFKSTLAFVKHDGKNKRDVWLVKPVGRDLRKITNLPGEALSPSWSPDGRFVVFSHFDDRSHALGVWDRLTRQVQRIRFPGNTVIGPCFLPDNKVAVSLSSGRNPDIFLLNHLFKKERELEANPSINVSPSFDATGTKMAFTSSRMGGPQVFMKDMTTGQVTRISKTGSYNTEPSISPDGTLVAFTKMTDTGHRIFVYDMVTQSERQVSFGPGRDEQPSFAPDSYFLAFTSNRNGAQQIFLVTRHGGDPKRVPTGPGDASFARWGMIPE.

An N-terminal signal peptide occupies residues 1-26 (MRHRSCFSLFAGLALVFCLAVGTAAA).

Belongs to the TolB family. In terms of assembly, the Tol-Pal system is composed of five core proteins: the inner membrane proteins TolA, TolQ and TolR, the periplasmic protein TolB and the outer membrane protein Pal. They form a network linking the inner and outer membranes and the peptidoglycan layer.

It localises to the periplasm. Functionally, part of the Tol-Pal system, which plays a role in outer membrane invagination during cell division and is important for maintaining outer membrane integrity. The polypeptide is Tol-Pal system protein TolB (Nitratidesulfovibrio vulgaris (strain ATCC 29579 / DSM 644 / CCUG 34227 / NCIMB 8303 / VKM B-1760 / Hildenborough) (Desulfovibrio vulgaris)).